Here is a 285-residue protein sequence, read N- to C-terminus: 3',5'-nucleoside bisphosphate phosphatase (285 aa).

Mn(2+) contacts are provided by His-7, His-9, Asp-14, His-39, Glu-64, and His-75. Positions 14 and 39 each coordinate substrate. Substrate is bound by residues 99–102 (RLER) and 134–135 (RT). 3 residues coordinate Mn(2+): His-191, Asp-248, and His-250. Residue His-250 participates in substrate binding.

It belongs to the PHP family. As to quaternary structure, monomer. It depends on Mn(2+) as a cofactor.

The enzyme catalyses a ribonucleoside 3',5'-bisphosphate + H2O = a ribonucleoside 5'-phosphate + phosphate. Its function is as follows. Hydrolyzes 3',5'-bisphosphonucleosides (pGp, pCp, pUp, and pIp) to nucleoside 5'-phosphate and orthophosphate. Has similar catalytic efficiencies with all the bases. Also shows activity with ribonucleoside 2'-deoxyribonucleoside 3',5'-bisphosphates. Does not show activity with nucleoside 2',5'-bisphosphates. This is 3',5'-nucleoside bisphosphate phosphatase from Chromobacterium violaceum (strain ATCC 12472 / DSM 30191 / JCM 1249 / CCUG 213 / NBRC 12614 / NCIMB 9131 / NCTC 9757 / MK).